A 323-amino-acid chain; its full sequence is tRNA U34 carboxymethyltransferase (323 aa).

Carboxy-S-adenosyl-L-methionine contacts are provided by residues K91, W105, K110, G130, 152–154 (DPT), 181–182 (IE), M196, Y200, and R315.

Belongs to the class I-like SAM-binding methyltransferase superfamily. CmoB family. As to quaternary structure, homotetramer.

It carries out the reaction carboxy-S-adenosyl-L-methionine + 5-hydroxyuridine(34) in tRNA = 5-carboxymethoxyuridine(34) in tRNA + S-adenosyl-L-homocysteine + H(+). In terms of biological role, catalyzes carboxymethyl transfer from carboxy-S-adenosyl-L-methionine (Cx-SAM) to 5-hydroxyuridine (ho5U) to form 5-carboxymethoxyuridine (cmo5U) at position 34 in tRNAs. The sequence is that of tRNA U34 carboxymethyltransferase from Salmonella paratyphi B (strain ATCC BAA-1250 / SPB7).